Consider the following 331-residue polypeptide: Pectate lyase B (331 aa).

Residues 1 to 25 form the signal peptide; sequence MKFTGSPLLWPSWLPLPAPPPPLPS. An N-linked (GlcNAc...) asparagine glycan is attached at Asn99. The Ca(2+) site is built by Asp139, Asp169, and Asp173. Residue Arg226 is part of the active site.

Belongs to the polysaccharide lyase 1 family. The cofactor is Ca(2+).

Its subcellular location is the secreted. The enzyme catalyses Eliminative cleavage of (1-&gt;4)-alpha-D-galacturonan to give oligosaccharides with 4-deoxy-alpha-D-galact-4-enuronosyl groups at their non-reducing ends.. The protein operates within glycan metabolism; pectin degradation; 2-dehydro-3-deoxy-D-gluconate from pectin: step 2/5. In terms of biological role, acts as a virulence factor active in plant tissue maceration. This chain is Pectate lyase B (PLB), found in Colletotrichum gloeosporioides (Anthracnose fungus).